The following is a 255-amino-acid chain: Tryptophan synthase alpha chain (255 aa).

Residues Glu49 and Asp60 each act as proton acceptor in the active site.

Belongs to the TrpA family. In terms of assembly, tetramer of two alpha and two beta chains.

It catalyses the reaction (1S,2R)-1-C-(indol-3-yl)glycerol 3-phosphate + L-serine = D-glyceraldehyde 3-phosphate + L-tryptophan + H2O. It participates in amino-acid biosynthesis; L-tryptophan biosynthesis; L-tryptophan from chorismate: step 5/5. Its function is as follows. The alpha subunit is responsible for the aldol cleavage of indoleglycerol phosphate to indole and glyceraldehyde 3-phosphate. This Desulfovibrio desulfuricans (strain ATCC 27774 / DSM 6949 / MB) protein is Tryptophan synthase alpha chain.